The following is a 396-amino-acid chain: Tryptophan synthase beta chain (396 aa).

The residue at position 88 (Lys88) is an N6-(pyridoxal phosphate)lysine.

Belongs to the TrpB family. In terms of assembly, tetramer of two alpha and two beta chains. The cofactor is pyridoxal 5'-phosphate.

The catalysed reaction is (1S,2R)-1-C-(indol-3-yl)glycerol 3-phosphate + L-serine = D-glyceraldehyde 3-phosphate + L-tryptophan + H2O. It functions in the pathway amino-acid biosynthesis; L-tryptophan biosynthesis; L-tryptophan from chorismate: step 5/5. In terms of biological role, the beta subunit is responsible for the synthesis of L-tryptophan from indole and L-serine. This is Tryptophan synthase beta chain from Leptospira biflexa serovar Patoc (strain Patoc 1 / Ames).